A 259-amino-acid polypeptide reads, in one-letter code: Probable ABC transporter permease protein RT0041 (259 aa).

Transmembrane regions (helical) follow at residues V20–Y40, L49–V69, V148–M168, L195–I215, and A237–F257.

The protein belongs to the MlaE permease family.

Its subcellular location is the cell inner membrane. Its function is as follows. Could be part of an ABC transporter complex. In Rickettsia typhi (strain ATCC VR-144 / Wilmington), this protein is Probable ABC transporter permease protein RT0041.